We begin with the raw amino-acid sequence, 170 residues long: MNLTLFATEGFGLNFNLFETNILNWAVVVFGLYKFLPGFLGKMLQKRREGILLELKDAEDRLLNATQALEKAKKDLSSAEEKASQIKADSLKRSESIRMESEKKAIEEMARIKQSAISDESSEASRAISQLRKEAVELAIKKALDSLPNRLDKTTQENLVTQSINNIEVN.

The chain crosses the membrane as a helical span at residues I22–G41. A disordered region spans residues A72–R98.

The protein belongs to the ATPase B chain family. In terms of assembly, F-type ATPases have 2 components, F(1) - the catalytic core - and F(0) - the membrane proton channel. F(1) has five subunits: alpha(3), beta(3), gamma(1), delta(1), epsilon(1). F(0) has four main subunits: a(1), b(1), b'(1) and c(10-14). The alpha and beta chains form an alternating ring which encloses part of the gamma chain. F(1) is attached to F(0) by a central stalk formed by the gamma and epsilon chains, while a peripheral stalk is formed by the delta, b and b' chains.

Its subcellular location is the cellular thylakoid membrane. Functionally, f(1)F(0) ATP synthase produces ATP from ADP in the presence of a proton or sodium gradient. F-type ATPases consist of two structural domains, F(1) containing the extramembraneous catalytic core and F(0) containing the membrane proton channel, linked together by a central stalk and a peripheral stalk. During catalysis, ATP synthesis in the catalytic domain of F(1) is coupled via a rotary mechanism of the central stalk subunits to proton translocation. Its function is as follows. Component of the F(0) channel, it forms part of the peripheral stalk, linking F(1) to F(0). This Prochlorococcus marinus (strain MIT 9301) protein is ATP synthase subunit b.